Consider the following 156-residue polypeptide: Bacterial ferritin (156 aa).

In terms of domain architecture, Ferritin-like diiron spans M1–G146. Fe cation is bound by residues E18, E51, H54, E94, E128, and H131.

It belongs to the bacterioferritin family. As to quaternary structure, the bacterioferritin (BFR) complex is formed of 24 subunits (BfrA and BfrB) of unknown stoichiometry. The BFR is arranged as 12 dimers that are packed together to form an approximately spherical molecule with a central cavity, in which large amounts of iron can be deposited.

The protein localises to the cytoplasm. The enzyme catalyses 4 Fe(2+) + O2 + 4 H(+) = 4 Fe(3+) + 2 H2O. It catalyses the reaction Fe(2+)(in) = Fe(2+)(out). Functionally, part of the iron-storage bacterioferritin (BFR) complex which stores about 50% of intracellular iron. Iron-storage protein, whose ferroxidase center binds Fe(2+), oxidizes it using dioxygen to Fe(3+), and participates in the subsequent Fe(3+) oxide mineral core formation within the central cavity of the BFR protein shell. BFR rapidly binds iron in labeling experiments in vivo during iron-limiting conditions. In Synechocystis sp. (strain ATCC 27184 / PCC 6803 / Kazusa), this protein is Bacterial ferritin.